Reading from the N-terminus, the 155-residue chain is Cyclic pyranopterin monophosphate synthase (155 aa).

Residues 75-77 (LCH) and 111-112 (ME) each bind substrate. Residue Asp-126 is part of the active site.

It belongs to the MoaC family. In terms of assembly, homohexamer; trimer of dimers.

The enzyme catalyses (8S)-3',8-cyclo-7,8-dihydroguanosine 5'-triphosphate = cyclic pyranopterin phosphate + diphosphate. It functions in the pathway cofactor biosynthesis; molybdopterin biosynthesis. Its function is as follows. Catalyzes the conversion of (8S)-3',8-cyclo-7,8-dihydroguanosine 5'-triphosphate to cyclic pyranopterin monophosphate (cPMP). This is Cyclic pyranopterin monophosphate synthase from Corynebacterium efficiens (strain DSM 44549 / YS-314 / AJ 12310 / JCM 11189 / NBRC 100395).